The chain runs to 246 residues: DNA polymerase sliding clamp 3 (246 aa).

This sequence belongs to the PCNA family. In terms of assembly, the subunits circularize to form a toroid; DNA passes through its center. Replication factor C (RFC) is required to load the toroid on the DNA. Forms dimeric complexes with PCNA1 and PCNA2, and trimeric complexes with PCNA123 and PCNA323; does not form homotrimers. Crystal structures show a heterotetramer of 2 PCNA2 and 2 PCNA3, which would be large enough to clamp a Holliday junction.

Its function is as follows. Sliding clamp subunit that acts as a moving platform for DNA processing. Responsible for tethering the catalytic subunit of DNA polymerase and other proteins to DNA during high-speed replication. Both trimeric complexes inhibit DNA ligase and both 3'-5' and 5'-3' activity of Hel308 (Hjm) helicase, but stimulate Hjc, the Holliday junction cleavage enzyme. This Sulfurisphaera tokodaii (strain DSM 16993 / JCM 10545 / NBRC 100140 / 7) (Sulfolobus tokodaii) protein is DNA polymerase sliding clamp 3.